The following is a 218-amino-acid chain: Small ribosomal subunit protein uS5 (218 aa).

The disordered stretch occupies residues 1–45; sequence MPGRQRRDGGNGPAGQNSNGPEGRDNRRGGGDRRGGGDRRDNAAE. Residues 22-45 show a composition bias toward basic and acidic residues; sequence EGRDNRRGGGDRRGGGDRRDNAAE. In terms of domain architecture, S5 DRBM spans 48 to 111; sequence QLERVVAINR…EEARKGFFRV (64 aa).

It belongs to the universal ribosomal protein uS5 family. As to quaternary structure, part of the 30S ribosomal subunit. Contacts proteins S4 and S8.

With S4 and S12 plays an important role in translational accuracy. Functionally, located at the back of the 30S subunit body where it stabilizes the conformation of the head with respect to the body. The protein is Small ribosomal subunit protein uS5 of Nocardia farcinica (strain IFM 10152).